The sequence spans 142 residues: Large ribosomal subunit protein uL22c (142 aa).

Belongs to the universal ribosomal protein uL22 family. In terms of assembly, part of the 50S ribosomal subunit.

The protein localises to the plastid. It is found in the chloroplast. Functionally, this protein binds specifically to 23S rRNA. The globular domain of the protein is located near the polypeptide exit tunnel on the outside of the subunit, while an extended beta-hairpin is found that lines the wall of the exit tunnel in the center of the 70S ribosome. The chain is Large ribosomal subunit protein uL22c (rpl22) from Oenothera parviflora (Small-flowered evening primrose).